A 395-amino-acid polypeptide reads, in one-letter code: Succinyl-diaminopimelate desuccinylase (395 aa).

His74 is a binding site for Zn(2+). Asp76 is a catalytic residue. A Zn(2+)-binding site is contributed by Asp107. Glu141 acts as the Proton acceptor in catalysis. Zn(2+) is bound by residues Glu142, Glu170, and His368.

It belongs to the peptidase M20A family. DapE subfamily. Homodimer. Zn(2+) serves as cofactor. The cofactor is Co(2+).

It catalyses the reaction N-succinyl-(2S,6S)-2,6-diaminopimelate + H2O = (2S,6S)-2,6-diaminopimelate + succinate. It participates in amino-acid biosynthesis; L-lysine biosynthesis via DAP pathway; LL-2,6-diaminopimelate from (S)-tetrahydrodipicolinate (succinylase route): step 3/3. In terms of biological role, catalyzes the hydrolysis of N-succinyl-L,L-diaminopimelic acid (SDAP), forming succinate and LL-2,6-diaminopimelate (DAP), an intermediate involved in the bacterial biosynthesis of lysine and meso-diaminopimelic acid, an essential component of bacterial cell walls. The polypeptide is Succinyl-diaminopimelate desuccinylase (Brucella melitensis biotype 1 (strain ATCC 23456 / CCUG 17765 / NCTC 10094 / 16M)).